The primary structure comprises 484 residues: Glutamyl-tRNA(Gln) amidotransferase subunit A (484 aa).

Catalysis depends on charge relay system residues Lys78 and Ser153. Ser177 serves as the catalytic Acyl-ester intermediate.

The protein belongs to the amidase family. GatA subfamily. Heterotrimer of A, B and C subunits.

The catalysed reaction is L-glutamyl-tRNA(Gln) + L-glutamine + ATP + H2O = L-glutaminyl-tRNA(Gln) + L-glutamate + ADP + phosphate + H(+). Allows the formation of correctly charged Gln-tRNA(Gln) through the transamidation of misacylated Glu-tRNA(Gln) in organisms which lack glutaminyl-tRNA synthetase. The reaction takes place in the presence of glutamine and ATP through an activated gamma-phospho-Glu-tRNA(Gln). In Thermodesulfovibrio yellowstonii (strain ATCC 51303 / DSM 11347 / YP87), this protein is Glutamyl-tRNA(Gln) amidotransferase subunit A.